The primary structure comprises 304 residues: Putative dihydroorotate dehydrogenase A (fumarate) (304 aa).

FMN-binding positions include Ser-22 and 46–47 (KG). Substrate-binding positions include Lys-46 and 70–74 (NSVGL). Residues Asn-100 and Asn-128 each coordinate FMN. Asn-128 is a binding site for substrate. Cys-131 functions as the Nucleophile in the catalytic mechanism. 2 residues coordinate FMN: Lys-166 and Val-192. Residue 193–194 (NT) coordinates substrate. Residues Gly-218, 244–245 (GG), and 266–267 (GT) contribute to the FMN site.

The protein belongs to the dihydroorotate dehydrogenase family. Type 1 subfamily. As to quaternary structure, homodimer. FMN is required as a cofactor.

The protein localises to the cytoplasm. The enzyme catalyses (S)-dihydroorotate + fumarate = orotate + succinate. The protein operates within pyrimidine metabolism; UMP biosynthesis via de novo pathway. Its function is as follows. Catalyzes the conversion of dihydroorotate to orotate with fumarate as the electron acceptor. This chain is Putative dihydroorotate dehydrogenase A (fumarate) (pyrD), found in Solibacter usitatus (strain Ellin6076).